A 232-amino-acid chain; its full sequence is Ribosomal RNA small subunit methyltransferase G (232 aa).

Residues Gly-93, Leu-98, 144-145, and Arg-163 contribute to the S-adenosyl-L-methionine site; that span reads VE.

This sequence belongs to the methyltransferase superfamily. RNA methyltransferase RsmG family.

It is found in the cytoplasm. The catalysed reaction is guanosine(527) in 16S rRNA + S-adenosyl-L-methionine = N(7)-methylguanosine(527) in 16S rRNA + S-adenosyl-L-homocysteine. Functionally, specifically methylates the N7 position of guanine in position 527 of 16S rRNA. The polypeptide is Ribosomal RNA small subunit methyltransferase G (Burkholderia pseudomallei (strain 668)).